We begin with the raw amino-acid sequence, 945 residues long: Glutamyl aminopeptidase (945 aa).

Residues 1-18 lie on the Cytoplasmic side of the membrane; sequence MNFAEEEPSKKYCIKGKH. A helical; Signal-anchor for type II membrane protein membrane pass occupies residues 19 to 39; that stretch reads VAIICGVVVAVGLIVGLSVGL. Over 40 to 945 the chain is Extracellular; sequence TRSCEQDTTP…SIREWFASLP (906 aa). Positions 43 to 77 are disordered; the sequence is CEQDTTPAPSQPPPEASTALPPQDQNVCPDSEDES. N-linked (GlcNAc...) asparagine glycosylation is found at Asn-116 and Asn-189. Glu-215 serves as a coordination point for substrate. N-linked (GlcNAc...) asparagine glycosylation occurs at Asn-316. A substrate-binding site is contributed by 349-353; sequence GAMEN. Residue His-385 coordinates Zn(2+). Residue Glu-386 is the Proton acceptor of the active site. His-389 and Glu-408 together coordinate Zn(2+). Residues Asn-546, Asn-601, Asn-637, Asn-669, Asn-754, and Asn-792 are each glycosylated (N-linked (GlcNAc...) asparagine). Arg-878 serves as a coordination point for substrate.

It belongs to the peptidase M1 family. In terms of assembly, homodimer; disulfide-linked. Requires Zn(2+) as cofactor. As to expression, early B-lineage cells and certain stromal cell of hemopoietic tissues. Also expressed by capillary endothelial cells, placenta, and epithelial cells of the intestine and proximal renal tubules.

The protein resides in the cell membrane. It carries out the reaction Release of N-terminal glutamate (and to a lesser extent aspartate) from a peptide.. Its activity is regulated as follows. Substrate specificity is modulated by calcium which enhances the enzymatic activity for cleavage of acidic residues while reducing its activity with basic residues. Inhibited by aminopeptidase inhibitors amastatin and bestatin. Its function is as follows. Regulates central hypertension through its calcium-modulated preference to cleave N-terminal acidic residues from peptides such as angiotensin II. The protein is Glutamyl aminopeptidase (Enpep) of Mus musculus (Mouse).